The primary structure comprises 101 residues: Protein Tat (101 aa).

The interval 1 to 24 (MEPIDPNLEPWNHPGSQPKTACNN) is interaction with human CREBBP. Residues 1–48 (MEPIDPNLEPWNHPGSQPKTACNNCYCKQCCYHCQLCFTKKGLGISYG) are transactivation. Cys-22, Cys-25, and Cys-27 together coordinate Zn(2+). Residues 22-37 (CNNCYCKQCCYHCQLC) are cysteine-rich. The residue at position 28 (Lys-28) is an N6-acetyllysine; by host PCAF. Zn(2+) contacts are provided by Cys-30, His-33, Cys-34, and Cys-37. Residues 38–48 (FTKKGLGISYG) are core. The disordered stretch occupies residues 48–101 (GRRKRKQRRRTSESSQNHQDPVPKQPLSQPGGIETGQKKSKKEVESQTTSDQFA). A Nuclear localization signal, RNA-binding (TAR), and protein transduction motif is present at residues 49-57 (RRKRKQRRR). The tract at residues 49-86 (RRKRKQRRRTSESSQNHQDPVPKQPLSQPGGIETGQKK) is interaction with the host capping enzyme RNGTT. Residue Lys-51 is modified to N6-acetyllysine; by host EP300 and GCN5L2. Arg-52 is subject to Asymmetric dimethylarginine; by host PRMT6. Residue Lys-71 forms a Glycyl lysine isopeptide (Lys-Gly) (interchain with G-Cter in ubiquitin) linkage.

It belongs to the lentiviruses Tat family. Interacts with host CCNT1. Associates with the P-TEFb complex composed at least of Tat, P-TEFb (CDK9 and CCNT1), TAR RNA, RNA Pol II. Recruits the HATs CREBBP, TAF1/TFIID, EP300, PCAF and GCN5L2. Interacts with host KAT5/Tip60; this interaction targets the latter to degradation. Interacts with the host deacetylase SIRT1. Interacts with host capping enzyme RNGTT; this interaction stimulates RNGTT. Binds to host KDR, and to the host integrins ITGAV/ITGB3 and ITGA5/ITGB1. Interacts with host KPNB1/importin beta-1 without previous binding to KPNA1/importin alpha-1. Interacts with EIF2AK2. Interacts with host nucleosome assembly protein NAP1L1; this interaction may be required for the transport of Tat within the nucleus, since the two proteins interact at the nuclear rim. Interacts with host C1QBP/SF2P32; this interaction involves lysine-acetylated Tat. Interacts with the host chemokine receptors CCR2, CCR3 and CXCR4. Interacts with host DPP4/CD26; this interaction may trigger an anti-proliferative effect. Interacts with host LDLR. Interacts with the host extracellular matrix metalloproteinase MMP1. Interacts with host PRMT6; this interaction mediates Tat's methylation. Interacts with, and is ubiquitinated by MDM2/Hdm2. Interacts with host PSMC3 and HTATIP2. Interacts with STAB1; this interaction may overcome SATB1-mediated repression of IL2 and IL2RA (interleukin) in T cells by binding to the same domain than HDAC1. Interacts (when acetylated) with human CDK13, thereby increasing HIV-1 mRNA splicing and promoting the production of the doubly spliced HIV-1 protein Nef. Interacts with host TBP; this interaction modulates the activity of transcriptional pre-initiation complex. Interacts with host RELA. Asymmetrical arginine methylation by host PRMT6 seems to diminish the transactivation capacity of Tat and affects the interaction with host CCNT1. Post-translationally, polyubiquitination by host MDM2 does not target Tat to degradation, but activates its transactivation function and fosters interaction with CCNT1 and TAR RNA. In terms of processing, phosphorylated by EIF2AK2 on serine and threonine residues adjacent to the basic region important for TAR RNA binding and function. Phosphorylation of Tat by EIF2AK2 is dependent on the prior activation of EIF2AK2 by dsRNA.

Its subcellular location is the host nucleus. It is found in the host nucleolus. It localises to the host cytoplasm. The protein localises to the secreted. Its function is as follows. Transcriptional activator that increases RNA Pol II processivity, thereby increasing the level of full-length viral transcripts. Recognizes a hairpin structure at the 5'-LTR of the nascent viral mRNAs referred to as the transactivation responsive RNA element (TAR) and recruits the cyclin T1-CDK9 complex (P-TEFb complex) that will in turn hyperphosphorylate the RNA polymerase II to allow efficient elongation. The CDK9 component of P-TEFb and other Tat-activated kinases hyperphosphorylate the C-terminus of RNA Pol II that becomes stabilized and much more processive. Other factors such as HTATSF1/Tat-SF1, SUPT5H/SPT5, and HTATIP2 are also important for Tat's function. Besides its effect on RNA Pol II processivity, Tat induces chromatin remodeling of proviral genes by recruiting the histone acetyltransferases (HATs) CREBBP, EP300 and PCAF to the chromatin. This also contributes to the increase in proviral transcription rate, especially when the provirus integrates in transcriptionally silent region of the host genome. To ensure maximal activation of the LTR, Tat mediates nuclear translocation of NF-kappa-B by interacting with host RELA. Through its interaction with host TBP, Tat may also modulate transcription initiation. Tat can reactivate a latently infected cell by penetrating in it and transactivating its LTR promoter. In the cytoplasm, Tat is thought to act as a translational activator of HIV-1 mRNAs. In terms of biological role, extracellular circulating Tat can be endocytosed by surrounding uninfected cells via the binding to several surface receptors such as CD26, CXCR4, heparan sulfate proteoglycans (HSPG) or LDLR. Neurons are rarely infected, but they internalize Tat via their LDLR. Through its interaction with nuclear HATs, Tat is potentially able to control the acetylation-dependent cellular gene expression. Modulates the expression of many cellular genes involved in cell survival, proliferation or in coding for cytokines or cytokine receptors. Tat plays a role in T-cell and neurons apoptosis. Tat induced neurotoxicity and apoptosis probably contribute to neuroAIDS. Circulating Tat also acts as a chemokine-like and/or growth factor-like molecule that binds to specific receptors on the surface of the cells, affecting many cellular pathways. In the vascular system, Tat binds to ITGAV/ITGB3 and ITGA5/ITGB1 integrins dimers at the surface of endothelial cells and competes with bFGF for heparin-binding sites, leading to an excess of soluble bFGF. The chain is Protein Tat from Pan troglodytes (Chimpanzee).